Consider the following 299-residue polypeptide: Tetrahydromethanopterin S-methyltransferase subunit E (299 aa).

6 consecutive transmembrane segments (helical) span residues 57-79 (AISG…AWAL), 95-115 (GVAA…RTVG), 133-153 (IGPI…AAYL), 158-178 (LGNP…VGAI), 237-257 (GLCF…GNII), and 262-282 (VTKT…AAGI).

This sequence belongs to the MtrE family. In terms of assembly, the complex is composed of 8 subunits; MtrA, MtrB, MtrC, MtrD, MtrE, MtrF, MtrG and MtrH.

It localises to the cell membrane. The catalysed reaction is 5-methyl-5,6,7,8-tetrahydromethanopterin + coenzyme M + 2 Na(+)(in) = 5,6,7,8-tetrahydromethanopterin + methyl-coenzyme M + 2 Na(+)(out). The protein operates within one-carbon metabolism; methanogenesis from CO(2); methyl-coenzyme M from 5,10-methylene-5,6,7,8-tetrahydromethanopterin: step 2/2. Its function is as follows. Part of a complex that catalyzes the formation of methyl-coenzyme M and tetrahydromethanopterin from coenzyme M and methyl-tetrahydromethanopterin. This is an energy-conserving, sodium-ion translocating step. This Methanococcus maripaludis (strain C5 / ATCC BAA-1333) protein is Tetrahydromethanopterin S-methyltransferase subunit E.